We begin with the raw amino-acid sequence, 450 residues long: MSDSKEPSVQQLGLLEEEQLRGLGFRQTRGYKSLAGCLGHGALVLQLLSFTLLAGLLIQVSKFPSSISQEQSKQDAIYQNLTQLKAAVGEFSEKSKLQEIYQELTQLKAAVGELPEKSKQQEIYQELTRLKAAVGELPEKSKQQEIYQELTRLKAAVGELPEKSKQQEIYQELTRLKAAVGELPEKSKQQEIYQELTRLKAAVGELPEKSKQQEIYQELTRLKAAVGELPEKSKQQEIYQELTRLKAAVGELPEKSKQQEIYQELTRLKAAVGELPEKSKQQEIYQELTQLKAAVERLCRPCPWEWTFFQGNCYFMSNSQRDWHDSVTACQEVGAQLVVIKSAEEQNFLQLQSSRSNRFAWMGLSDLNQEGTWQWVDGSPLSPSFKQYWNRGEPNNVGEEDCAEFSGNGWNDDKCNLAKFWICKKSAASCSRDEEQFLSPAPATPNPPPV.

Topologically, residues 1–37 (MSDSKEPSVQQLGLLEEEQLRGLGFRQTRGYKSLAGC) are cytoplasmic. 3 short sequence motifs (endocytosis signal) span residues 14 to 15 (LL), 16 to 18 (EEE), and 31 to 34 (YKSL). A helical; Signal-anchor for type II membrane protein transmembrane segment spans residues 38–58 (LGHGALVLQLLSFTLLAGLLI). The Extracellular portion of the chain corresponds to 59–450 (QVSKFPSSIS…APATPNPPPV (392 aa)). Asn80 carries an N-linked (GlcNAc...) asparagine glycan. 9 consecutive repeat copies span residues 96-118 (KLQEIYQELTQLKAAVGELPEKS), 119-141 (KQQEIYQELTRLKAAVGELPEKS), 142-164 (KQQEIYQELTRLKAAVGELPEKS), 165-187 (KQQEIYQELTRLKAAVGELPEKS), 188-210 (KQQEIYQELTRLKAAVGELPEKS), 211-233 (KQQEIYQELTRLKAAVGELPEKS), 234-256 (KQQEIYQELTRLKAAVGELPEKS), 257-279 (KQQEIYQELTRLKAAVGELPEKS), and 280-303 (KQQEIYQELTQLKAAVERLCRPCP). The tract at residues 96–303 (KLQEIYQELT…AVERLCRPCP (208 aa)) is 9 X approximate tandem repeats. Disulfide bonds link Cys302–Cys313, Cys330–Cys423, and Cys402–Cys415. The region spanning 309–424 (FQGNCYFMSN…CNLAKFWICK (116 aa)) is the C-type lectin domain. Residues Glu393, Asn395, Val397, Glu400, Asn411, and Asp412 each contribute to the Ca(2+) site.

Homotetramer. Interacts with C1QBP; the interaction is indicative for a C1q:C1QBP:CD209 signaling complex. Interacts with ICAM2 and ICAM3 by binding to mannose-like carbohydrates. Interacts (via C-type lectin domain) with CEACAM1 (via Lewis X moieties); this interaction is regulated by the glycosylation pattern of CEACAM1 on cell types and regulates contact between dendritic cells and neutrophils.

The protein resides in the membrane. In terms of biological role, pathogen-recognition receptor expressed on the surface of immature dendritic cells (DCs) and involved in initiation of primary immune response. Thought to mediate the endocytosis of pathogens which are subsequently degraded in lysosomal compartments. The receptor returns to the cell membrane surface and the pathogen-derived antigens are presented to resting T-cells via MHC class II proteins to initiate the adaptive immune response. Probably recognizes in a calcium-dependent manner high mannose N-linked oligosaccharides in a variety of pathogen antigens. Its function is as follows. On DCs it is a high affinity receptor for ICAM2 and ICAM3 by binding to mannose-like carbohydrates. May act as a DC rolling receptor that mediates transendothelial migration of DC presursors from blood to tissues by binding endothelial ICAM2. Seems to regulate DC-induced T-cell proliferation by binding to ICAM3 on T-cells in the immunological synapse formed between DC and T-cells. The sequence is that of CD209 antigen (CD209) from Hylobates lar (Lar gibbon).